The following is a 334-amino-acid chain: Leucine-rich repeat-containing protein 39 (334 aa).

LRR repeat units lie at residues 59–82 (EDGRIILRIEKEEWKTLPSSLLKL), 83–105 (NQLQEWQLHRTGLLKIPEFIGRF), 106–128 (QHLIVLDLSRNTISEIPRGIGLL), 129–151 (TRLQELILSYNKIKTVPKELSNC), 153–175 (SLEKLELAVNRDISDLPTELSKL), 176–198 (LKLTHLDLSMNQFTTIPLAVLDM), 199–221 (PALEWLDMGSNSLQQLPDTLDRM), 223–244 (SLHTLWLQRNEITCLPETIRNM), 245–269 (KNLGTLVLSNNKLQDIPGCMEEMTS), and 272–295 (FVNFRDNPLRLEVTLPPSDDVDGE).

As to quaternary structure, interacts with MYH7 (via C-terminus). Expressed in heart and skeletal muscle (at protein level). Also detected in kidney (at protein level). Not detected in other tissues tested (at protein level).

It is found in the cytoplasm. It localises to the myofibril. The protein localises to the sarcomere. Its subcellular location is the m line. In terms of biological role, component of the sarcomeric M-band which plays a role in myocyte response to biomechanical stress. May regulate expression of other M-band proteins via an SRF-dependent pathway. Important for normal contractile function in heart. This Rattus norvegicus (Rat) protein is Leucine-rich repeat-containing protein 39.